Consider the following 208-residue polypeptide: Ectodysplasin-A receptor-associated adapter protein (208 aa).

Positions 1–18 (MASPDDPLRSDHMAKEPV) are enriched in basic and acidic residues. The disordered stretch occupies residues 1–99 (MASPDDPLRS…KGSCSCPSCS (99 aa)). Over residues 49–61 (TVNSNCPPNSDDQ) the composition is skewed to polar residues. In terms of domain architecture, Death spans 116–195 (DTIRIKLDPC…KILRRWVDEE (80 aa)).

Binds EDAR. Self-associates and binds TRAF1, TRAF2 and TRAF3.

The protein resides in the cytoplasm. Its function is as follows. Adapter protein that interacts with EDAR DEATH domain and couples the receptor to EDA signaling pathway during morphogenesis of ectodermal organs. Mediates the activation of NF-kappa-B. This Mus musculus (Mouse) protein is Ectodysplasin-A receptor-associated adapter protein (Edaradd).